The sequence spans 386 residues: L-lactate oxidase (386 aa).

The region spanning 16–382 (AQAPFPICFA…RTITLVKNDG (367 aa)) is the FMN hydroxy acid dehydrogenase domain. Pyruvate is bound at residue Y42. Residues 95–97 (PVG), S124, and Q146 contribute to the FMN site. Y148 lines the pyruvate pocket. FMN is bound at residue T174. Residue R183 participates in pyruvate binding. FMN is bound by residues K253 and S275. Residues H277 and R280 each contribute to the pyruvate site. Residue H277 is the Proton acceptor of the active site. FMN-binding positions include 308–312 (DSGVY) and R332.

The protein belongs to the FMN-dependent alpha-hydroxy acid dehydrogenase family. As to quaternary structure, homotetramer. FMN serves as cofactor.

The catalysed reaction is a (2S)-2-hydroxycarboxylate + O2 = a 2-oxocarboxylate + H2O2. The enzyme catalyses (S)-lactate + O2 = pyruvate + H2O2. It carries out the reaction 2-hydroxyoctanoate + O2 = 2-oxooctanoate + H2O2. It catalyses the reaction mandelate + O2 = phenylglyoxylate + H2O2. The catalysed reaction is 2-hydroxyoctadecanoate + O2 = 2-oxooctadecanoate + H2O2. The enzyme catalyses (S)-2-hydroxyglutarate + O2 = H2O2 + 2-oxoglutarate. Its function is as follows. Oxidase that catalyzes the oxidation of a broad range of 2-hydroxyacids in vitro, such as (S)-lactate, 2-hydroxyoctanoate, mandelate, 2-hydroxyoctadecanoate and (S)-2-hydroxyglutarate, to the corresponding 2-oxoacids, with a reduction of O2 to H2O2. May be involved in the utilization of L-lactate as an energy source for growth. The sequence is that of L-lactate oxidase from Lysinibacillus sphaericus (strain C3-41).